Here is a 423-residue protein sequence, read N- to C-terminus: RNA polymerase sigma factor SigA (423 aa).

Residues 1–76 (MKKSKRKNAQ…EEDLPIPKIS (76 aa)) are disordered. Over residues 21–70 (VQEEAEELPEFPEGEPDPDLEDPDLALEDDLLDLPEEGEGLDLEEEEEDL) the composition is skewed to acidic residues. Residues 78-113 (SDPVRQYLHEIGQVPLLTLEEEVELARKVEEGMEAI) are sigma-70 factor domain-1. Positions 187-257 (LIEANLRLVV…NRAIADQART (71 aa)) are sigma-70 factor domain-2. The Interaction with polymerase core subunit RpoC signature appears at 211–214 (DLIQ). The tract at residues 266–344 (ETINKLSRTA…DEHLPSPVDA (79 aa)) is sigma-70 factor domain-3. Positions 357 to 409 (ALSKLSEREAMVLKLRKGLIDGREHTLEEVGAFFGVTRERIRQIENKALRKLK) are sigma-70 factor domain-4. Residues 383-402 (LEEVGAFFGVTRERIRQIEN) constitute a DNA-binding region (H-T-H motif).

This sequence belongs to the sigma-70 factor family. RpoD/SigA subfamily. Interacts transiently with the RNA polymerase catalytic core formed by RpoA, RpoB, RpoC and RpoZ (2 alpha, 1 beta, 1 beta' and 1 omega subunit) to form the RNA polymerase holoenzyme that can initiate transcription.

The protein resides in the cytoplasm. Functionally, sigma factors are initiation factors that promote the attachment of RNA polymerase to specific initiation sites and are then released. This sigma factor is the primary sigma factor during exponential growth. The chain is RNA polymerase sigma factor SigA from Thermus thermophilus (strain ATCC BAA-163 / DSM 7039 / HB27).